We begin with the raw amino-acid sequence, 294 residues long: Glyceraldehyde-3-phosphate dehydrogenase (294 aa).

The NAD(+) site is built by aspartate 19, arginine 63, and threonine 105. Residues serine 134–threonine 136 and threonine 165 each bind D-glyceraldehyde 3-phosphate. Residue cysteine 135 is the Nucleophile of the active site. Lysine 177 is modified (N6-acetyllysine). Residues threonine 194–glycine 195 and arginine 217 each bind D-glyceraldehyde 3-phosphate. Lysine 234 bears the N6-acetyllysine mark.

The protein belongs to the glyceraldehyde-3-phosphate dehydrogenase family. In terms of assembly, homotetramer.

The protein resides in the cytoplasm. It carries out the reaction D-glyceraldehyde 3-phosphate + phosphate + NAD(+) = (2R)-3-phospho-glyceroyl phosphate + NADH + H(+). The protein operates within carbohydrate degradation; glycolysis; pyruvate from D-glyceraldehyde 3-phosphate: step 1/5. Catalyzes the oxidative phosphorylation of glyceraldehyde 3-phosphate (G3P) to 1,3-bisphosphoglycerate (BPG) using the cofactor NAD. The first reaction step involves the formation of a hemiacetal intermediate between G3P and a cysteine residue, and this hemiacetal intermediate is then oxidized to a thioester, with concomitant reduction of NAD to NADH. The reduced NADH is then exchanged with the second NAD, and the thioester is attacked by a nucleophilic inorganic phosphate to produce BPG. The sequence is that of Glyceraldehyde-3-phosphate dehydrogenase (gap) from Pseudescherichia vulneris (Escherichia vulneris).